The following is a 199-amino-acid chain: RNA-binding protein, mRNA-processing factor 2a (199 aa).

One can recognise an RRM domain in the interval 20-97; that stretch reads RTLFVSGLPV…QTLRLEFAKA (78 aa).

Interacts with Bucky ball (BUC); to mediate Balbiani body formation and oocyte polarity during early oogenesis.

The protein resides in the cytoplasm. It localises to the nucleus. It is found in the stress granule. RNA-binding protein involved in the regulation of smooth muscle cell differentiation and proliferation in the gastrointestinal system. RNA-binding protein localized in Balbiani body (electron-dense aggregates in the oocyte) and germ plasm during oogenesis, and may be required to maintain germ plasm mRNA translational repression. Translational regulator during topographic map formation in the visual system. Establishes oocyte polarity through interaction with Bucky ball (BUC). Acts as a pre-mRNA alternative splicing regulator. Mediates ACTN1 and FLNB alternative splicing. Likely binds to mRNA tandem CAC trinucleotide or CA dinucleotide motifs. The protein is RNA-binding protein, mRNA-processing factor 2a of Danio rerio (Zebrafish).